The primary structure comprises 146 residues: D-aminoacyl-tRNA deacylase (146 aa).

The Gly-cisPro motif, important for rejection of L-amino acids signature appears at 138-139 (GP).

It belongs to the DTD family. As to quaternary structure, homodimer.

It localises to the cytoplasm. The catalysed reaction is glycyl-tRNA(Ala) + H2O = tRNA(Ala) + glycine + H(+). It catalyses the reaction a D-aminoacyl-tRNA + H2O = a tRNA + a D-alpha-amino acid + H(+). Functionally, an aminoacyl-tRNA editing enzyme that deacylates mischarged D-aminoacyl-tRNAs. Also deacylates mischarged glycyl-tRNA(Ala), protecting cells against glycine mischarging by AlaRS. Acts via tRNA-based rather than protein-based catalysis; rejects L-amino acids rather than detecting D-amino acids in the active site. By recycling D-aminoacyl-tRNA to D-amino acids and free tRNA molecules, this enzyme counteracts the toxicity associated with the formation of D-aminoacyl-tRNA entities in vivo and helps enforce protein L-homochirality. This is D-aminoacyl-tRNA deacylase from Stenotrophomonas maltophilia (strain K279a).